Consider the following 570-residue polypeptide: Urease subunit alpha 1 (570 aa).

The region spanning 131–570 (GGIDTHVHFI…VPMAQRYFLF (440 aa)) is the Urease domain. Ni(2+) is bound by residues histidine 136, histidine 138, and lysine 219. An N6-carboxylysine modification is found at lysine 219. Histidine 221 provides a ligand contact to substrate. Ni(2+) is bound by residues histidine 248 and histidine 274. Histidine 322 serves as the catalytic Proton donor. Aspartate 362 is a binding site for Ni(2+).

It belongs to the metallo-dependent hydrolases superfamily. Urease alpha subunit family. In terms of assembly, heterotrimer of UreA (gamma), UreB (beta) and UreC (alpha) subunits. Three heterotrimers associate to form the active enzyme. It depends on Ni cation as a cofactor. Post-translationally, carboxylation allows a single lysine to coordinate two nickel ions.

The protein resides in the cytoplasm. It catalyses the reaction urea + 2 H2O + H(+) = hydrogencarbonate + 2 NH4(+). It functions in the pathway nitrogen metabolism; urea degradation; CO(2) and NH(3) from urea (urease route): step 1/1. In terms of biological role, disrupting the ure1 operon causes loss of urease activity, decreased resistance to low pH killing in vitro and decreased pathogen survival when inoculated in BALB/c mice by gavage. The sequence is that of Urease subunit alpha 1 from Brucella suis biovar 1 (strain 1330).